A 530-amino-acid chain; its full sequence is Membrane-associated transporter protein (530 aa).

Topologically, residues 1–45 (MSGSNGPTDTHTYQSLAEDCPFGSVEQPKRSTGRLVMHSMAMFGR) are cytoplasmic. A helical membrane pass occupies residues 46–66 (EFCYAVEAAYVTPVLLSVGLP). Residues 67-68 (KS) are Extracellular-facing. The helical transmembrane segment at 69-89 (LYSMVWLLSPILGFLLQPVVG) threads the bilayer. At 90–105 (SASDHCRARWGRRRPY) the chain is on the cytoplasmic side. The chain crosses the membrane as a helical span at residues 106–126 (ILTLAIMMLLGMALYLNGDAV). Residues 127 to 138 (VSALVANPRQKL) lie on the Extracellular side of the membrane. The helical transmembrane segment at 139–159 (IWAISITMVGVVLFDFSADFI) threads the bilayer. The Cytoplasmic segment spans residues 160–184 (DGPIKAYLFDVCSHQDKEKGLHYHA). A helical transmembrane segment spans residues 185 to 205 (LFTGFGGALGYILGAIDWVHL). Residues 206–216 (DLGRLLGTEFQ) are Extracellular-facing. A helical transmembrane segment spans residues 217 to 237 (VMFFFSALVLILCFITHLCSI). Topologically, residues 238-318 (PEAPLRDAAT…ALVNMPSHYR (81 aa)) are cytoplasmic. The tract at residues 275 to 299 (KNGGADTEQPVQEWKNKKPSGQSQR) is disordered. The helical transmembrane segment at 319–339 (CLCVSHLIGWTAFLSNMLFFT) threads the bilayer. Topologically, residues 340 to 366 (DFMGQIVYHGDPYGAHNSTEFLIYERG) are extracellular. N356 is a glycosylation site (N-linked (GlcNAc...) asparagine). The helical transmembrane segment at 367 to 387 (VEVGCWGLCINSVFSSVYSYF) threads the bilayer. The Cytoplasmic segment spans residues 388–398 (QKAMVSYIGLK). The helical transmembrane segment at 399–419 (GLYFMGYLLFGLGTGFIGLFP) threads the bilayer. The Extracellular portion of the chain corresponds to 420–425 (NVYSTL). Residues 426 to 446 (VLCSMFGVMSSTLYTVPFNLI) form a helical membrane-spanning segment. The Cytoplasmic portion of the chain corresponds to 447 to 477 (AEYHREEEKEKGQEAPGGPDNQGRGKGVDCA). A helical membrane pass occupies residues 478-498 (ALTCMVQLAQILVGGGLGFLV). At 499–504 (NMAGSV) the chain is on the extracellular side. Residues 505 to 525 (VVVVITASAVSLIGCCFVALF) form a helical membrane-spanning segment. Residues 526–530 (VRYVD) lie on the Cytoplasmic side of the membrane.

The protein belongs to the glycoside-pentoside-hexuronide (GPH) cation symporter transporter (TC 2.A.2) family. In terms of assembly, interacts with TYRP1. As to expression, mainly expressed in eyeballs and skin melanocytes. Also detected in kidney, colon, gall bladder and pancreas.

Its subcellular location is the melanosome membrane. The catalysed reaction is sucrose(out) + H(+)(out) = sucrose(in) + H(+)(in). The enzyme catalyses D-glucose(out) + H(+)(out) = D-glucose(in) + H(+)(in). In terms of biological role, proton-associated glucose and sucrose transporter. May be able to transport also fructose. Expressed at a late melanosome maturation stage where functions as a proton/glucose exporter which increase lumenal pH by decreasing glycolysis. Regulates melanogenesis by maintaining melanosome neutralization that is initially initiated by transient OCA2 and required for a proper function of the tyrosinase TYR. The polypeptide is Membrane-associated transporter protein (Slc45a2) (Mus musculus (Mouse)).